Here is a 273-residue protein sequence, read N- to C-terminus: E3 ubiquitin-protein ligase SDIR1 (273 aa).

Topologically, residues 1 to 33 (MSFVFRGSRGDLESGFSGGFLPERRAMRVHGAR) are cytoplasmic. A helical membrane pass occupies residues 34-54 (PVNSNSLAFLVTVLLLFMILN). The Lumenal portion of the chain corresponds to 55-56 (SH). Residues 57 to 77 (QMPPNFLLWLVLGVFLMATTL) form a helical membrane-spanning segment. The Cytoplasmic portion of the chain corresponds to 78 to 273 (RMYATCQQLQ…EIDDDASDMV (196 aa)). The RING-type; atypical zinc-finger motif lies at 211–252 (CSVCLEQVTVGEIVRTLPCLHQFHAGCIDPWLRQQGTCPVCK).

In terms of assembly, interacts with ATP1/SDIRIP1. Ubiquitous.

Its subcellular location is the endoplasmic reticulum membrane. The catalysed reaction is S-ubiquitinyl-[E2 ubiquitin-conjugating enzyme]-L-cysteine + [acceptor protein]-L-lysine = [E2 ubiquitin-conjugating enzyme]-L-cysteine + N(6)-ubiquitinyl-[acceptor protein]-L-lysine.. Functionally, E3 ubiquitin-protein ligase that acts as a positive regulator of abscisic acid-related stress signal transduction. Interacts with and ubiquitinates ATP1/SDIRIP1 to modulate ATP1/SDIRIP1 stability through the 26S proteasome pathway. Regulates abscisic acid (ABA) and salt stress responses by negatively affecting ATP1/SDIRIP1 stability. The SDIR1-ATP1/SDIRIP1 complex plays an important role in ABA signaling through the ubiquitination pathway. This Arabidopsis thaliana (Mouse-ear cress) protein is E3 ubiquitin-protein ligase SDIR1.